The sequence spans 173 residues: NADH-ubiquinone oxidoreductase chain 6 (173 aa).

4 helical membrane-spanning segments follow: residues 12 to 32, 47 to 67, 94 to 114, and 142 to 162; these read VFWL…VSLV, GSFL…VIFA, VVLA…GECG, and GALM…LVLV.

It belongs to the complex I subunit 6 family.

The protein resides in the mitochondrion membrane. The enzyme catalyses a ubiquinone + NADH + 5 H(+)(in) = a ubiquinol + NAD(+) + 4 H(+)(out). Functionally, core subunit of the mitochondrial membrane respiratory chain NADH dehydrogenase (Complex I) that is believed to belong to the minimal assembly required for catalysis. Complex I functions in the transfer of electrons from NADH to the respiratory chain. The immediate electron acceptor for the enzyme is believed to be ubiquinone. This is NADH-ubiquinone oxidoreductase chain 6 (MT-ND6) from Pelomedusa subrufa (African side-necked turtle).